Consider the following 308-residue polypeptide: Testis-specific Y-encoded protein 3 (308 aa).

Belongs to the nucleosome assembly protein (NAP) family.

It is found in the cytoplasm. The protein resides in the nucleus. In terms of biological role, may be involved in sperm differentiation and proliferation. This is Testis-specific Y-encoded protein 3 (TSPY3) from Homo sapiens (Human).